Here is a 304-residue protein sequence, read N- to C-terminus: uncharacterized protein (304 aa).

Coiled-coil stretches lie at residues 3–35 and 89–132; these read KNQYISQNMENKEIENKEIENKKTDSKEFDKEI and KSNK…NSNL. The interval 96-121 is disordered; sequence LQNKQQENSEEKNSEEKNSEEKNSEE.

This is an uncharacterized protein from Acanthamoeba polyphaga (Amoeba).